We begin with the raw amino-acid sequence, 425 residues long: MIDIKLLRKEPEIFYNALEKRAMDKEIIDRILVLDREWRSILAEVNNLKAKRNELSKMVAKLKAEKKDIEAEELIKESKGIGEKIKKLDERQKRLEEEMKNLALEIPNIPHESVPVGKDETENVEVRKWGTPRKFDFEPKAHWDLGPELGLIDFERAAKLSGARFTVMYGLLAKLERALIQFMLDVHTKEHGYTEVWVPHLVRREVMIWTGKLPKFEDESYNTKKDDLFLIPTAEVPITALHAEEILKEKELPKKYVSYTSCYRREAGSYGKDVRGMIRQHQFDKVELVWFTKEEESFNALEQLTRDAERILQLLELPYRVVNLCTGDLGFASAKTYDIEVWLPSYNDYKEVSSCSNITDFQARRANIKYRGSDNKTHFVHTLNGSGLAIGRTLVAIMENYQNEDGTITIPKVLVPYMGVEKISI.

233-235 (TAE) serves as a coordination point for L-serine. 264–266 (RRE) contacts ATP. Glu-287 provides a ligand contact to L-serine. 351-354 (EVSS) provides a ligand contact to ATP. L-serine is bound at residue Ser-386.

It belongs to the class-II aminoacyl-tRNA synthetase family. Type-1 seryl-tRNA synthetase subfamily. Homodimer. The tRNA molecule binds across the dimer.

Its subcellular location is the cytoplasm. It catalyses the reaction tRNA(Ser) + L-serine + ATP = L-seryl-tRNA(Ser) + AMP + diphosphate + H(+). It carries out the reaction tRNA(Sec) + L-serine + ATP = L-seryl-tRNA(Sec) + AMP + diphosphate + H(+). The protein operates within aminoacyl-tRNA biosynthesis; selenocysteinyl-tRNA(Sec) biosynthesis; L-seryl-tRNA(Sec) from L-serine and tRNA(Sec): step 1/1. Its function is as follows. Catalyzes the attachment of serine to tRNA(Ser). Is also able to aminoacylate tRNA(Sec) with serine, to form the misacylated tRNA L-seryl-tRNA(Sec), which will be further converted into selenocysteinyl-tRNA(Sec). This is Serine--tRNA ligase from Thermosipho melanesiensis (strain DSM 12029 / CIP 104789 / BI429).